Here is a 204-residue protein sequence, read N- to C-terminus: TPR repeat-containing protein RHE_CH03534.1 (204 aa).

The signal sequence occupies residues 1-29; sequence MSAMRLFALTSAMLPLAFILSTSPFPATA. TPR repeat units follow at residues 84–117, 118–151, and 153–185; these read INLL…KPDY, AESW…EPRH, and GALS…YPAD.

This Rhizobium etli (strain ATCC 51251 / DSM 11541 / JCM 21823 / NBRC 15573 / CFN 42) protein is TPR repeat-containing protein RHE_CH03534.1.